The following is a 319-amino-acid chain: Annexin A4 (319 aa).

Residue A2 is modified to N-acetylalanine. A Phosphothreonine modification is found at T7. The residue at position 12 (S12) is a Phosphoserine. Annexin repeat units lie at residues 14-85 (FNAA…GMMT), 86-157 (PTVL…SLSA), 169-241 (ALMR…AIVK), and 245-316 (NKSA…ILCG). K213, K293, and K300 each carry N6-acetyllysine.

This sequence belongs to the annexin family. Monomer. Binds to SFTPA1 in a Ca(2+)-dependent manner.

The protein localises to the zymogen granule membrane. May play a role in alveolar type II cells through interaction with the surfactant protein SFTPA1 (SP-A). The protein is Annexin A4 (ANXA4) of Bos taurus (Bovine).